The chain runs to 63 residues: Kappa-theraphotoxin-Cg3a 1 (63 aa).

Positions 1-21 (MKNTSILFILGLALLLVLAFE) are cleaved as a signal peptide. Residues 22-29 (VQVGESDG) constitute a propeptide that is removed on maturation. 3 cysteine pairs are disulfide-bonded: C31-C46, C38-C51, and C45-C58.

The protein belongs to the neurotoxin 10 (Hwtx-1) family. 44 (Jztx-4) subfamily. In terms of tissue distribution, expressed by the venom gland.

The protein localises to the secreted. In terms of biological role, gating modifier of Kv2.1/KCNB1, Kv2.2/KCNB2 and Kv4.3/KCND3 channels. The protein is Kappa-theraphotoxin-Cg3a 1 of Chilobrachys guangxiensis (Chinese earth tiger tarantula).